A 518-amino-acid polypeptide reads, in one-letter code: Phytoene desaturase (neurosporene-forming) (518 aa).

14 to 47 provides a ligand contact to FAD; that stretch reads LVIGSGLGGLAAAMRLGAKGWRVTVIDKLDVPGG.

This sequence belongs to the carotenoid/retinoid oxidoreductase family. FAD is required as a cofactor.

The enzyme catalyses 15-cis-phytoene + 3 A = all-trans-neurosporene + 3 AH2. Its pathway is carotenoid biosynthesis. In terms of biological role, converts phytoene into all-trans-neurosporene as the major product, via the intermediary of phytofluene and zeta-carotene, by the introduction of three double bonds. The chain is Phytoene desaturase (neurosporene-forming) (crtI) from Cereibacter sphaeroides (strain ATCC 17023 / DSM 158 / JCM 6121 / CCUG 31486 / LMG 2827 / NBRC 12203 / NCIMB 8253 / ATH 2.4.1.) (Rhodobacter sphaeroides).